The primary structure comprises 279 residues: NADPH-dependent 7-cyano-7-deazaguanine reductase (279 aa).

86 to 88 contributes to the substrate binding site; sequence IES. 88–89 lines the NADPH pocket; it reads SK. Cys187 functions as the Thioimide intermediate in the catalytic mechanism. The active-site Proton donor is Asp194. Residue 226-227 participates in substrate binding; the sequence is HE. 255–256 is an NADPH binding site; it reads RG.

It belongs to the GTP cyclohydrolase I family. QueF type 2 subfamily. Homodimer.

The protein resides in the cytoplasm. The enzyme catalyses 7-aminomethyl-7-carbaguanine + 2 NADP(+) = 7-cyano-7-deazaguanine + 2 NADPH + 3 H(+). It functions in the pathway tRNA modification; tRNA-queuosine biosynthesis. Catalyzes the NADPH-dependent reduction of 7-cyano-7-deazaguanine (preQ0) to 7-aminomethyl-7-deazaguanine (preQ1). The chain is NADPH-dependent 7-cyano-7-deazaguanine reductase from Actinobacillus pleuropneumoniae serotype 7 (strain AP76).